Here is a 421-residue protein sequence, read N- to C-terminus: Tol-Pal system protein TolA (421 aa).

Residues 1–13 are Cytoplasmic-facing; it reads MSKATEQNDKLKR. A helical membrane pass occupies residues 14–34; that stretch reads AIIISAVLHVILFAALIWSSF. Residues 35-421 are Periplasmic-facing; the sequence is DENIEASAGG…FKNAPLDFKP (387 aa). A domain II (alpha-helical) region spans residues 48 to 310; sequence SSIDAVMVDS…LSSGKNAPKT (263 aa). The interval 65-266 is disordered; that stretch reads KRMQSQESSA…KAAADKKAAA (202 aa). Composition is skewed to basic and acidic residues over residues 73–175 and 206–266; these read SAKR…EAEA and EARK…KAAA. Repeat copies occupy residues 224-229, 230-234, 235-240, 241-245, 246-250, 251-255, 256-260, 261-266, 267-271, 272-277, 278-282, 283-287, and 288-292. A 13 X tandem repeats of [EDA]-K(1,2)-A(2,4) region spans residues 224–292; it reads EKKAAAEKAA…EKAAAAKAAA (69 aa). Residues 300–336 are disordered; the sequence is ELSSGKNAPKTGGGAKGNNASPAGSGNTKNNGASGAD. A domain III (functional) region spans residues 311–421; the sequence is GGGAKGNNAS…FKNAPLDFKP (111 aa). Polar residues predominate over residues 317–332; sequence NNASPAGSGNTKNNGA. The cysteines at positions 363 and 388 are disulfide-linked.

It belongs to the TolA family. The Tol-Pal system is composed of five core proteins: the inner membrane proteins TolA, TolQ and TolR, the periplasmic protein TolB and the outer membrane protein Pal. They form a network linking the inner and outer membranes and the peptidoglycan layer. TolA interacts with TolQ and TolR via its N-terminal domain. Interacts with CpoB, and with the trimeric porins OmpC, OmpF, PhoE and LamB via its central domain. Interacts with TolB via its C-terminal domain. Also interacts with Pal via its C-terminal domain. This interaction is proton motive force dependent and requires TolQ and TolR.

It is found in the cell inner membrane. Its function is as follows. Part of the Tol-Pal system, which plays a role in outer membrane invagination during cell division and is important for maintaining outer membrane integrity. The Tol-Pal system is also required for polar localization of chemoreceptors clusters. The system also appears to be required for the activity of several outer membrane-localized enzymes with cell wall remodeling activity. Is involved in the uptake of group A colicins (colicins A, E1, E2, E3, and K) and in the uptake of filamentous phage DNA. The sequence is that of Tol-Pal system protein TolA from Escherichia coli (strain K12).